A 329-amino-acid chain; its full sequence is Acrosin (329 aa).

The signal sequence occupies residues 1–17 (MLPTAVLLVLAVSVVAR). N-linked (GlcNAc...) asparagine glycosylation is present at Asn-19. 6 cysteine pairs are disulfide-bonded: Cys-22–Cys-152, Cys-26–Cys-160, Cys-71–Cys-87, Cys-175–Cys-244, Cys-207–Cys-223, and Cys-234–Cys-264. The Peptidase S1 domain maps to 40–288 (IIGGQDAAHG…YLNWIASKIG (249 aa)). Residues His-86 and Asp-140 each act as charge relay system in the active site. An N-linked (GlcNAc...) asparagine glycan is attached at Asn-208. Residue Ser-238 is the Charge relay system of the active site.

This sequence belongs to the peptidase S1 family. As to quaternary structure, heavy chain (catalytic) and a light chain linked by two disulfide bonds. Forms a heterodimer with SERPINA5.

The catalysed reaction is Preferential cleavage: Arg-|-Xaa, Lys-|-Xaa.. Inhibited by SERPINA5. Its function is as follows. Acrosin is the major protease of mammalian spermatozoa. It is a serine protease of trypsin-like cleavage specificity, it is synthesized in a zymogen form, proacrosin and stored in the acrosome. In Ovis aries (Sheep), this protein is Acrosin (ACR).